Here is a 164-residue protein sequence, read N- to C-terminus: UPF0114 protein KPN78578_33570 (164 aa).

4 helical membrane passes run 15 to 35 (LLAPVYFGLSLGLIALTIKFF), 53 to 73 (MILTLLSLVDMTLVGGLLVMV), 109 to 126 (VAASIVAISSIHLLRVFM), and 136 to 156 (LMWYVIIHLTFVLSAFVMGYL).

The protein belongs to the UPF0114 family.

The protein localises to the cell membrane. The protein is UPF0114 protein KPN78578_33570 of Klebsiella pneumoniae subsp. pneumoniae (strain ATCC 700721 / MGH 78578).